A 205-amino-acid chain; its full sequence is RNA pyrophosphohydrolase (205 aa).

Residues 6-149 (GFRPNVGIVL…KRGVYARALR (144 aa)) form the Nudix hydrolase domain. The short motif at 38–59 (GGMNTDETPVEAMYRELREETG) is the Nudix box element. The segment at 177–205 (PGSSAAGHDSPRKRPRKRSGARPMRINND) is disordered. Positions 187–196 (PRKRPRKRSG) are enriched in basic residues.

This sequence belongs to the Nudix hydrolase family. RppH subfamily. A divalent metal cation is required as a cofactor.

In terms of biological role, accelerates the degradation of transcripts by removing pyrophosphate from the 5'-end of triphosphorylated RNA, leading to a more labile monophosphorylated state that can stimulate subsequent ribonuclease cleavage. In Xanthomonas oryzae pv. oryzae (strain MAFF 311018), this protein is RNA pyrophosphohydrolase.